Consider the following 255-residue polypeptide: Large ribosomal subunit protein uL4 (255 aa).

Belongs to the universal ribosomal protein uL4 family. As to quaternary structure, part of the 50S ribosomal subunit.

One of the primary rRNA binding proteins, this protein initially binds near the 5'-end of the 23S rRNA. It is important during the early stages of 50S assembly. It makes multiple contacts with different domains of the 23S rRNA in the assembled 50S subunit and ribosome. Its function is as follows. Forms part of the polypeptide exit tunnel. The protein is Large ribosomal subunit protein uL4 of Thermococcus onnurineus (strain NA1).